A 209-amino-acid polypeptide reads, in one-letter code: Guanylate kinase (209 aa).

One can recognise a Guanylate kinase-like domain in the interval 7-185; that stretch reads GNLYIVAAPS…AAMELQSIVI (179 aa). 14–21 contacts ATP; that stretch reads APSGGGKT.

The protein belongs to the guanylate kinase family.

It localises to the cytoplasm. The enzyme catalyses GMP + ATP = GDP + ADP. In terms of biological role, essential for recycling GMP and indirectly, cGMP. This is Guanylate kinase from Legionella pneumophila (strain Lens).